A 237-amino-acid polypeptide reads, in one-letter code: Purine nucleoside phosphorylase DeoD-type (237 aa).

Residue His4 coordinates a purine D-ribonucleoside. Phosphate-binding positions include Gly20, Arg24, Arg43, and 87–90 (RVGT). Residues 179–181 (EME) and 203–204 (SD) each bind a purine D-ribonucleoside. The active-site Proton donor is the Asp204.

Belongs to the PNP/UDP phosphorylase family. Homohexamer; trimer of homodimers.

The catalysed reaction is a purine D-ribonucleoside + phosphate = a purine nucleobase + alpha-D-ribose 1-phosphate. The enzyme catalyses a purine 2'-deoxy-D-ribonucleoside + phosphate = a purine nucleobase + 2-deoxy-alpha-D-ribose 1-phosphate. In terms of biological role, catalyzes the reversible phosphorolytic breakdown of the N-glycosidic bond in the beta-(deoxy)ribonucleoside molecules, with the formation of the corresponding free purine bases and pentose-1-phosphate. In Streptococcus pyogenes serotype M5 (strain Manfredo), this protein is Purine nucleoside phosphorylase DeoD-type.